The primary structure comprises 337 residues: tRNA N6-adenosine threonylcarbamoyltransferase (337 aa).

Positions 114 and 118 each coordinate Fe cation. Substrate is bound by residues 136–140 (LVSGG), aspartate 169, glycine 182, aspartate 186, and asparagine 275. Aspartate 301 is a Fe cation binding site.

The protein belongs to the KAE1 / TsaD family. The cofactor is Fe(2+).

It is found in the cytoplasm. It catalyses the reaction L-threonylcarbamoyladenylate + adenosine(37) in tRNA = N(6)-L-threonylcarbamoyladenosine(37) in tRNA + AMP + H(+). Its function is as follows. Required for the formation of a threonylcarbamoyl group on adenosine at position 37 (t(6)A37) in tRNAs that read codons beginning with adenine. Is involved in the transfer of the threonylcarbamoyl moiety of threonylcarbamoyl-AMP (TC-AMP) to the N6 group of A37, together with TsaE and TsaB. TsaD likely plays a direct catalytic role in this reaction. The protein is tRNA N6-adenosine threonylcarbamoyltransferase of Streptococcus thermophilus (strain CNRZ 1066).